The chain runs to 158 residues: 2-C-methyl-D-erythritol 2,4-cyclodiphosphate synthase (158 aa).

The a divalent metal cation site is built by Asp-9 and His-11. 4-CDP-2-C-methyl-D-erythritol 2-phosphate is bound by residues 9 to 11 (DVH) and 35 to 36 (HS). Position 43 (His-43) interacts with a divalent metal cation. 4-CDP-2-C-methyl-D-erythritol 2-phosphate is bound by residues 57-59 (DIG), 62-66 (FPDTD), 101-107 (AQAPKMA), 133-136 (TTTE), Phe-140, and Arg-143.

The protein belongs to the IspF family. In terms of assembly, homotrimer. A divalent metal cation serves as cofactor.

The enzyme catalyses 4-CDP-2-C-methyl-D-erythritol 2-phosphate = 2-C-methyl-D-erythritol 2,4-cyclic diphosphate + CMP. It functions in the pathway isoprenoid biosynthesis; isopentenyl diphosphate biosynthesis via DXP pathway; isopentenyl diphosphate from 1-deoxy-D-xylulose 5-phosphate: step 4/6. In terms of biological role, involved in the biosynthesis of isopentenyl diphosphate (IPP) and dimethylallyl diphosphate (DMAPP), two major building blocks of isoprenoid compounds. Catalyzes the conversion of 4-diphosphocytidyl-2-C-methyl-D-erythritol 2-phosphate (CDP-ME2P) to 2-C-methyl-D-erythritol 2,4-cyclodiphosphate (ME-CPP) with a corresponding release of cytidine 5-monophosphate (CMP). In Vibrio cholerae serotype O1 (strain ATCC 39541 / Classical Ogawa 395 / O395), this protein is 2-C-methyl-D-erythritol 2,4-cyclodiphosphate synthase.